The sequence spans 504 residues: MEEFKGYLELDRSQQQDFLYSLSFQESIYTLAHDHGLNRLILNADSDKKYSLLIVKCLITQMYQQNLLIFSANEPKQNLFFGHNTDLYCRILFEAFTVILEIPFSLRERPFIERKEMVQFLNLRSIHSIFPFLEDKFSHSNYVVDILLPHSIHLEILVQTLRYWVKDASSLHLLRFFLHQYHNWNSFIIPKQSRFFFXKKKKBQRLFFFLYNSKVCEYESIFIFLRNQSVHLRSISSEAFLERIYFYEKMEYFLEVYAKDFQAFFWLFKDLFMHYVRYQGKCILVSKGTSFLMSKWKYYLVNLWQSCFYMWSQPGRVQINQFSNYSLDFLGYLSSVRRNPSMTWSQMLENSFLISLVIKKFDTRVPTIPLIRSLSKAKFSNILGYPISKASWADFSDSNIIDRFGRIYRNLSHYHSGSPKKTSLYKVKYILRLSCVRTLARKHKSKVRSFLKRFGSGLLEEFFMEEEQVLTLNLQKISFTLRRFYGRQIWYLDIFCINDLAKSE.

The protein belongs to the intron maturase 2 family. MatK subfamily.

Its subcellular location is the plastid. The protein localises to the chloroplast. Usually encoded in the trnK tRNA gene intron. Probably assists in splicing its own and other chloroplast group II introns. This chain is Maturase K, found in Impatiens capensis (Spotted jewelweed).